A 242-amino-acid chain; its full sequence is ATP synthase subunit a (242 aa).

6 consecutive transmembrane segments (helical) span residues 29 to 49 (SSIYMLLASILALTYFYLAFY), 84 to 104 (FIPLVFSLFIFILFCNLLGMT), 114 to 134 (IIVTFTLAILVFLIVTIVGFV), 140 to 160 (FLTLFLPHGTPLWLAPLIIVI), 181 to 201 (MAGHVLLKVIAGFTVSLMIYL), and 203 to 223 (FLPIPIMVILIGFEIFVAILQ).

It belongs to the ATPase A chain family. F-type ATPases have 2 components, CF(1) - the catalytic core - and CF(0) - the membrane proton channel. CF(1) has five subunits: alpha(3), beta(3), gamma(1), delta(1), epsilon(1). CF(0) has three main subunits: a(1), b(2) and c(9-12). The alpha and beta chains form an alternating ring which encloses part of the gamma chain. CF(1) is attached to CF(0) by a central stalk formed by the gamma and epsilon chains, while a peripheral stalk is formed by the delta and b chains.

The protein resides in the cell inner membrane. In terms of biological role, key component of the proton channel; it plays a direct role in the translocation of protons across the membrane. This is ATP synthase subunit a from Rickettsia peacockii (strain Rustic).